We begin with the raw amino-acid sequence, 423 residues long: Carboxypeptidase B2 (423 aa).

The N-terminal stretch at 1–22 (MKLYSLGVLVATVLFCGEHAFA) is a signal peptide. Positions 23 to 114 (FQRGQVLSAL…QTSNDTISPR (92 aa)) are cleaved as a propeptide — activation peptide. N-linked (GlcNAc...) asparagine glycosylation is found at N44, N73, N85, and N108. In terms of domain architecture, Peptidase M14 spans 122–419 (QYHSLNEIYS…VAVAKIASHV (298 aa)). Residues C178 and C191 are joined by a disulfide bond. The Zn(2+) site is built by H181 and E184. Substrate contacts are provided by residues 181–184 (HARE) and R239. N241 carries N-linked (GlcNAc...) asparagine glycosylation. Disulfide bonds link C250–C274 and C265–C279. 256 to 257 (NR) lines the substrate pocket. H310 provides a ligand contact to Zn(2+). Substrate is bound by residues 311 to 312 (SY) and Y363. Residue E385 is the Proton donor/acceptor of the active site.

This sequence belongs to the peptidase M14 family. The cofactor is Zn(2+).

Its subcellular location is the secreted. The enzyme catalyses Release of C-terminal Arg and Lys from a polypeptide.. TAFI/CPB2 is unique among carboxypeptidases in that it spontaneously inactivates with a short half-life, a property that is crucial for its role in controlling blood clot lysis. The zymogen is stabilized by interactions with the activation peptide. Release of the activation peptide increases a dynamic flap mobility and in time this leads to conformational changes that disrupt the catalytic site and expose a cryptic thrombin-cleavage site present at Arg-324. In terms of biological role, cleaves C-terminal arginine or lysine residues from biologically active peptides such as kinins or anaphylatoxins in the circulation thereby regulating their activities. Down-regulates fibrinolysis by removing C-terminal lysine residues from fibrin that has already been partially degraded by plasmin. This chain is Carboxypeptidase B2 (CPB2), found in Bos taurus (Bovine).